Here is a 398-residue protein sequence, read N- to C-terminus: Chalcone synthase (398 aa).

Residue Cys-167 is part of the active site.

The protein belongs to the thiolase-like superfamily. Chalcone/stilbene synthases family.

It carries out the reaction (E)-4-coumaroyl-CoA + 3 malonyl-CoA + 3 H(+) = 2',4,4',6'-tetrahydroxychalcone + 3 CO2 + 4 CoA. The protein operates within secondary metabolite biosynthesis; flavonoid biosynthesis. Its function is as follows. The primary product of this enzyme is 4,2',4',6'-tetrahydroxychalcone (also termed naringenin-chalcone or chalcone) which can under specific conditions spontaneously isomerize into naringenin. This chain is Chalcone synthase (CHS), found in Callistephus chinensis (China aster).